The chain runs to 293 residues: AKT-interacting protein (293 aa).

Polar residues predominate over residues 1-11; sequence MNPFWSMSTNA. A disordered region spans residues 1 to 44; the sequence is MNPFWSMSTNAGRKRSDGEEQSGSGEQRASPARPPFGKKQLPSI. The UBC core domain occupies 75-223; the sequence is YLEYSLLAEF…VVDSVKLCNS (149 aa). The tract at residues 260–293 is disordered; that stretch reads RPEDFNKGLPVSGLSWVKPGSTQPFSKEDNPLQT.

It belongs to the ubiquitin-conjugating enzyme family. FTS subfamily.

It localises to the cytoplasm. The protein localises to the cell membrane. Its function is as follows. May function to promote vesicle trafficking and/or fusion. May also regulate apoptosis. The polypeptide is AKT-interacting protein (aktip) (Danio rerio (Zebrafish)).